We begin with the raw amino-acid sequence, 124 residues long: Small ribosomal subunit protein uS11 (124 aa).

The segment at 102–124 (RIGRIEDATPIPHDGTTPKRKNR) is disordered.

The protein belongs to the universal ribosomal protein uS11 family. As to quaternary structure, part of the 30S ribosomal subunit.

Located on the platform of the 30S subunit. This is Small ribosomal subunit protein uS11 from Methanococcus maripaludis (strain C5 / ATCC BAA-1333).